Reading from the N-terminus, the 546-residue chain is Glucose-6-phosphate isomerase (546 aa).

Catalysis depends on E352, which acts as the Proton donor. Residues H383 and K511 contribute to the active site.

It belongs to the GPI family.

It is found in the cytoplasm. The enzyme catalyses alpha-D-glucose 6-phosphate = beta-D-fructose 6-phosphate. It participates in carbohydrate biosynthesis; gluconeogenesis. The protein operates within carbohydrate degradation; glycolysis; D-glyceraldehyde 3-phosphate and glycerone phosphate from D-glucose: step 2/4. Catalyzes the reversible isomerization of glucose-6-phosphate to fructose-6-phosphate. The sequence is that of Glucose-6-phosphate isomerase from Paramagnetospirillum magneticum (strain ATCC 700264 / AMB-1) (Magnetospirillum magneticum).